The primary structure comprises 46 residues: Esculentin-1SEb (46 aa).

Cysteines 40 and 46 form a disulfide.

Expressed by the skin glands.

The protein localises to the secreted. Its function is as follows. Mast cell degranulating peptide. Causes histamine release from rat peritoneal mast cells in vitro. Has antibacterial activity against the Gram-negative bacterium E.coli K12 and Gram-positive bacterium M.luteus NCT C2665. This Lithobates sevosus (Dusky gopher frog) protein is Esculentin-1SEb.